The chain runs to 157 residues: Ribonuclease H (157 aa).

In terms of domain architecture, RNase H type-1 spans 1 to 146 (MPDLVAYTDG…ADELARAGMA (146 aa)). The Mg(2+) site is built by D9, E52, D74, and D138.

It belongs to the RNase H family. Monomer. Requires Mg(2+) as cofactor.

The protein resides in the cytoplasm. It carries out the reaction Endonucleolytic cleavage to 5'-phosphomonoester.. Its function is as follows. Endonuclease that specifically degrades the RNA of RNA-DNA hybrids. The polypeptide is Ribonuclease H (Jannaschia sp. (strain CCS1)).